A 181-amino-acid chain; its full sequence is Phospholipase A2 inhibitor gamma subunit B (181 aa).

Cystine bridges form between C3/C27, C6/C13, C20/C48, C54/C75, C76/C81, C101/C126, C119/C146, and C152/C172.

It belongs to the CNF-like-inhibitor family. In terms of assembly, heterotrimer of 2 subunits A and 1 subunit B. As to expression, expressed by the liver.

It is found in the secreted. In terms of biological role, strongly inhibits its own venom PLA2 and all other PLA2s tested including Elapid, Crotalid and Viperid venom PLA2s, as well as honeybee PLA2s. The polypeptide is Phospholipase A2 inhibitor gamma subunit B (Laticauda semifasciata (Black-banded sea krait)).